The following is a 404-amino-acid chain: Tryptophan synthase beta chain (404 aa).

The residue at position 98 (lysine 98) is an N6-(pyridoxal phosphate)lysine.

This sequence belongs to the TrpB family. As to quaternary structure, tetramer of two alpha and two beta chains. The cofactor is pyridoxal 5'-phosphate.

It catalyses the reaction (1S,2R)-1-C-(indol-3-yl)glycerol 3-phosphate + L-serine = D-glyceraldehyde 3-phosphate + L-tryptophan + H2O. The protein operates within amino-acid biosynthesis; L-tryptophan biosynthesis; L-tryptophan from chorismate: step 5/5. Functionally, the beta subunit is responsible for the synthesis of L-tryptophan from indole and L-serine. This chain is Tryptophan synthase beta chain, found in Rhodopseudomonas palustris (strain HaA2).